A 382-amino-acid polypeptide reads, in one-letter code: Apolipoprotein A-IV (382 aa).

A signal peptide spans 1–20; sequence MFLKAVVLTLSLVAVTGAQA. 13 consecutive repeat copies span residues 33–54, 60–81, 82–103, 115–136, 137–158, 159–180, 181–202, 203–224, 225–246, 247–268, 269–286, 287–308, and 309–330. The interval 33-330 is 13 X 22 AA approximate tandem repeats; it reads DYFSQLSNNA…QVEELRQKLG (298 aa).

This sequence belongs to the apolipoprotein A1/A4/E family. In terms of assembly, homodimer. Phosphorylation sites are present in the extracellular medium.

It localises to the secreted. Its function is as follows. May have a role in chylomicrons and VLDL secretion and catabolism. Required for efficient activation of lipoprotein lipase by ApoC-II; potent activator of LCAT. Apoa-IV is a major component of HDL and chylomicrons. The sequence is that of Apolipoprotein A-IV (APOA4) from Mirounga angustirostris (Northern elephant seal).